Here is a 407-residue protein sequence, read N- to C-terminus: Argininosuccinate synthase (407 aa).

Residues 16–24 (AYSGGLDTS) and Ala44 each bind ATP. The L-citrulline site is built by Tyr96 and Ser101. Position 126 (Gly126) interacts with ATP. L-aspartate is bound by residues Thr128, Asn132, and Asp133. Asn132 provides a ligand contact to L-citrulline. Arg136, Ser185, Ser194, Glu270, and Tyr282 together coordinate L-citrulline.

Belongs to the argininosuccinate synthase family. Type 1 subfamily. As to quaternary structure, homotetramer.

Its subcellular location is the cytoplasm. The catalysed reaction is L-citrulline + L-aspartate + ATP = 2-(N(omega)-L-arginino)succinate + AMP + diphosphate + H(+). It participates in amino-acid biosynthesis; L-arginine biosynthesis; L-arginine from L-ornithine and carbamoyl phosphate: step 2/3. The protein is Argininosuccinate synthase of Shewanella sp. (strain ANA-3).